A 451-amino-acid chain; its full sequence is MRECISIHVGQAGVQIGNACWELYCLEHGIQPDGQMPSDKTIGGGDDSFNTFFSETGAGKHVPRAVFVDLEPTVIDEVRTGTYRQLFHPEQLITGKEDAANNYARGHYTIGKEIIDLVLDRIRKLADQCTGLQGFLVFHSFGGGTGSGFTSLLMERLSVDYGKKSKLEFSIYPAPQVSTAVVEPYNSILTTHTTLEHSDCAFMVDNEAIYDICRRNLDIERPTYTNLNRLISQIVSSITASLRFDGALNVDLTEFQTNLVPYPRIHFPLATYAPVISAEKAYHEQLSVAEITNACFEPANQMVKCDPRHGKYMACCLLYRGDVVPKDVNAAIATIKTKRSIQFVDWCPTGFKVGINYQPPTVVPGGDLAKVQRAVCMLSNTTAIAEAWARLDHKFVLMYAKRAFVHWYVGEGMEEGEFSEAREDMAALEKDYEEVGVDSVEGEGEEEGEEY.

The short motif at 1 to 4 (MREC) is the MREC motif element. Residues Gly10, Gln11, Ala12, and Gln15 each contribute to the GTP site. Lys40 carries the post-translational modification N6,N6,N6-trimethyllysine; alternate. Lys40 carries the N6-acetyllysine; alternate modification. The residue at position 48 (Ser48) is a Phosphoserine. The GTP site is built by Glu71, Ala99, Ser140, Gly143, Gly144, Thr145, Gly146, Thr179, Glu183, Asn206, Tyr224, and Asn228. A Mg(2+)-binding site is contributed by Glu71. Residue Ser232 is modified to Phosphoserine. Residue Leu252 coordinates GTP. Glu254 is an active-site residue. A 3'-nitrotyrosine modification is found at Tyr282. A Glycyl lysine isopeptide (Lys-Gly) (interchain with G-Cter in ubiquitin) cross-link involves residue Lys326. Arg339 is subject to Omega-N-methylarginine. Lys370 participates in a covalent cross-link: Glycyl lysine isopeptide (Lys-Gly) (interchain with G-Cter in ubiquitin). Phosphoserine is present on Ser439. Residues Glu443 and Glu445 each carry the 5-glutamyl polyglutamate modification. Tyr451 carries the post-translational modification 3'-nitrotyrosine.

Belongs to the tubulin family. As to quaternary structure, heterodimer of alpha- and beta-tubulin. A typical microtubule is a hollow water-filled tube with an outer diameter of 25 nm and an inner diameter of 15 nM. Alpha-beta heterodimers associate head-to-tail to form protofilaments running lengthwise along the microtubule wall with the beta-tubulin subunit facing the microtubule plus end conferring a structural polarity. Microtubules usually have 13 protofilaments but different protofilament numbers can be found in some organisms and specialized cells. Interacts with gamma-tubulin; the interaction allows microtubules to nucleate from the gamma-tubulin ring complex (gTuRC). Nascent microtubule interacts (via alpha-tubulin MREC motif) with TTC5/STRAP; this interaction may result in tubulin mRNA-targeted degradation. Component of sperm flagellar doublet microtubules. Requires Mg(2+) as cofactor. In terms of processing, some glutamate residues at the C-terminus are polyglycylated, resulting in polyglycine chains on the gamma-carboxyl group. Glycylation is mainly limited to tubulin incorporated into axonemes (cilia and flagella) whereas glutamylation is prevalent in neuronal cells, centrioles, axonemes, and the mitotic spindle. Both modifications can coexist on the same protein on adjacent residues, and lowering polyglycylation levels increases polyglutamylation, and reciprocally. Cilia and flagella glycylation is required for their stability and maintenance. Flagella glycylation controls sperm motility. Post-translationally, some glutamate residues at the C-terminus are polyglutamylated, resulting in polyglutamate chains on the gamma-carboxyl group. Polyglutamylation plays a key role in microtubule severing by spastin (SPAST). SPAST preferentially recognizes and acts on microtubules decorated with short polyglutamate tails: severing activity by SPAST increases as the number of glutamates per tubulin rises from one to eight, but decreases beyond this glutamylation threshold. Glutamylation is also involved in cilia motility. Acetylation of alpha chains at Lys-40 is located inside the microtubule lumen. This modification has been correlated with increased microtubule stability, intracellular transport and ciliary assembly. In terms of processing, methylation of alpha chains at Lys-40 is found in mitotic microtubules and is required for normal mitosis and cytokinesis contributing to genomic stability. Post-translationally, nitration of Tyr-451 is irreversible and interferes with normal dynein intracellular distribution. Undergoes a tyrosination/detyrosination cycle, the cyclic removal and re-addition of a C-terminal tyrosine residue by the enzymes tubulin tyrosine carboxypeptidase (MATCAP1, VASH1 or VASH2) and tubulin tyrosine ligase (TTL), respectively. In terms of processing, tyrosination promotes microtubule interaction with CAP-Gly domain-containing proteins such as CLIP1, CLIP2 and DCTN1. Tyrosination regulates the initiation of dynein-dynactin motility via interaction with DCTN1, which brings the dynein-dynactin complex into contact with microtubules. In neurons, tyrosinated tubulins mediate the initiation of retrograde vesicle transport. Post-translationally, detyrosination is involved in metaphase plate congression by guiding chromosomes during mitosis: detyrosination promotes interaction with CENPE, promoting pole-proximal transport of chromosomes toward the equator. Detyrosination increases microtubules-dependent mechanotransduction in dystrophic cardiac and skeletal muscle. In cardiomyocytes, detyrosinated microtubules are required to resist to contractile compression during contraction: detyrosination promotes association with desmin (DES) at force-generating sarcomeres, leading to buckled microtubules and mechanical resistance to contraction.

It is found in the cytoplasm. The protein localises to the cytoskeleton. It catalyses the reaction GTP + H2O = GDP + phosphate + H(+). Its function is as follows. Tubulin is the major constituent of microtubules, protein filaments consisting of alpha- and beta-tubulin heterodimers. Microtubules grow by the addition of GTP-tubulin dimers to the microtubule end, where a stabilizing cap forms. Below the cap, tubulin dimers are in GDP-bound state, owing to GTPase activity of alpha-tubulin. This chain is Tubulin alpha-1B chain (TUBA1B), found in Pan troglodytes (Chimpanzee).